A 152-amino-acid polypeptide reads, in one-letter code: Cell division protein SepF (152 aa).

Basic and acidic residues predominate over residues 23 to 32 (EVAREPEPMQ). Residues 23 to 42 (EVAREPEPMQKKTKKEKPSK) form a disordered region.

Belongs to the SepF family. In terms of assembly, homodimer. Interacts with FtsZ.

The protein localises to the cytoplasm. Functionally, cell division protein that is part of the divisome complex and is recruited early to the Z-ring. Probably stimulates Z-ring formation, perhaps through the cross-linking of FtsZ protofilaments. Its function overlaps with FtsA. The chain is Cell division protein SepF from Listeria welshimeri serovar 6b (strain ATCC 35897 / DSM 20650 / CCUG 15529 / CIP 8149 / NCTC 11857 / SLCC 5334 / V8).